Consider the following 349-residue polypeptide: Hepatic sodium/bile acid cotransporter (349 aa).

Topologically, residues 1–22 are extracellular; that stretch reads MEAHNASAPFNFTLPPNFGKRP. Asn5 and Asn11 each carry an N-linked (GlcNAc...) asparagine glycan. The chain crosses the membrane as a helical span at residues 23–44; that stretch reads TDLALSVILVFMLFFIMLSLGC. Topologically, residues 45-47 are cytoplasmic; it reads TME. The chain crosses the membrane as a helical span at residues 48–83; that stretch reads FSKIKAHLWKPKGLAIALVAQYGIMPLTAFVLGKVF. The Extracellular portion of the chain corresponds to 84–86; the sequence is RLK. A discontinuously helical membrane pass occupies residues 87-112; that stretch reads NIEALAILVCGCSPGGNLSNVFSLAM. Residues 113-115 are Cytoplasmic-facing; it reads KGD. A helical transmembrane segment spans residues 116–142; sequence MNLSIVMTTCSTFCALGMMPLLLYIYS. At 143–156 the chain is on the extracellular side; it reads RGIYDGDLKDKVPY. Residues 157–179 form a helical membrane-spanning segment; it reads KGIVISLVLVLIPCTIGIVLKSK. Residues 180-183 lie on the Cytoplasmic side of the membrane; that stretch reads RPQY. Residues 184–217 traverse the membrane as a helical segment; the sequence is MRYVIKGGMIIILLCSVAVTVLSAINVGKSIMFA. Residues 218 to 219 lie on the Extracellular side of the membrane; the sequence is MT. Residues 220 to 243 traverse the membrane as a helical segment; that stretch reads PLLIATSSLMPFIGFLLGYVLSAL. Topologically, residues 244–247 are cytoplasmic; sequence FCLN. A discontinuously helical transmembrane segment spans residues 248–273; that stretch reads GRCRRTVSMETGCQNVQLCSTILNVA. Residues 274-280 are Extracellular-facing; sequence FPPEVIG. A helical transmembrane segment spans residues 281-311; it reads PLFFFPLLYMIFQLGEGLLLIAIFWCYEKFK. Topologically, residues 312–349 are cytoplasmic; the sequence is TPKDKTKMIYTAATTEETIPGALGNGTYKGEDCSPCTA.

It belongs to the bile acid:sodium symporter (BASS) (TC 2.A.28) family. As to quaternary structure, (Microbial infection) Interacts with the myristoylated pre-S1 domain of hepatitis B virus large envelope protein; myristoylation is essential for this interaction. Expressed in liver. Expressed in placental trophoblasts.

Its subcellular location is the cell membrane. The catalysed reaction is taurocholate(out) + 2 Na(+)(out) = taurocholate(in) + 2 Na(+)(in). It catalyses the reaction cholate(out) + 2 Na(+)(out) = cholate(in) + 2 Na(+)(in). The enzyme catalyses estrone 3-sulfate(out) + 2 Na(+)(out) = estrone 3-sulfate(in) + 2 Na(+)(in). It carries out the reaction taurochenodeoxycholate(out) + 2 Na(+)(out) = taurochenodeoxycholate(in) + 2 Na(+)(in). The catalysed reaction is tauroursodeoxycholate(out) + 2 Na(+)(out) = tauroursodeoxycholate(in) + 2 Na(+)(in). It catalyses the reaction glycocholate(out) + 2 Na(+)(out) = glycocholate(in) + 2 Na(+)(in). The enzyme catalyses tauronorcholate(out) + 2 Na(+)(out) = tauronorcholate(in) + 2 Na(+)(in). It carries out the reaction taurodeoxycholate(out) + 2 Na(+)(out) = taurodeoxycholate(in) + 2 Na(+)(in). The catalysed reaction is tauroallocholate(out) + 2 Na(+)(out) = tauroallocholate(in) + 2 Na(+)(in). It catalyses the reaction taurohyodeoxycholate(out) + 2 Na(+)(out) = taurohyodeoxycholate(in) + 2 Na(+)(in). The enzyme catalyses taurohyocholate(out) + 2 Na(+)(out) = taurohyocholate(in) + 2 Na(+)(in). It carries out the reaction tauro-beta-muricholate(out) + 2 Na(+)(out) = tauro-beta-muricholate(in) + 2 Na(+)(in). The transport of bile acids is sodium-dependent. Its function is as follows. As a major transporter of conjugated bile salts from plasma into the hepatocyte, it plays a key role in the enterohepatic circulation of bile salts necessary for the solubilization and absorption of dietary fat and fat-soluble vitamins. It is strictly dependent on the extracellular presence of sodium. It exhibits broad substrate specificity and transports various bile acids, such as taurocholate, cholate, as well as non-bile acid organic compounds, such as estrone sulfate. Works collaboratively with the ileal transporter (NTCP2), the organic solute transporter (OST), and the bile salt export pump (BSEP), to ensure efficacious biological recycling of bile acids during enterohepatic circulation. In terms of biological role, (Microbial infection) Acts as an entry receptor for hepatitis B virus (HBV). The recognition for human SLC10A1/NTCP is highly specific. This is Hepatic sodium/bile acid cotransporter (SLC10A1) from Homo sapiens (Human).